We begin with the raw amino-acid sequence, 341 residues long: DNA fragmentation factor subunit beta (341 aa).

The region spanning 7–83 (KPKTFKLRSL…LLTAGQTWQG (77 aa)) is the CIDE-N domain.

As to quaternary structure, heterodimer of DFFA and DFFB. Interacts with H1-1.

Its subcellular location is the cytoplasm. It localises to the nucleus. Inhibited by DFFA (DFF45). Interacts with HIST1H1A. Nuclease that induces DNA fragmentation and chromatin condensation during apoptosis. Degrades naked DNA and induces apoptotic morphology. In Bos taurus (Bovine), this protein is DNA fragmentation factor subunit beta (DFFB).